Reading from the N-terminus, the 477-residue chain is Delayed-rectifier potassium channel regulatory subunit KCNS2 (477 aa).

Residues 1-184 (MTRQSLWDVS…LALDNPGYSV (184 aa)) lie on the Cytoplasmic side of the membrane. The helical transmembrane segment at 185–206 (LSRVFSVLSILVVLGSIITMCL) threads the bilayer. The Extracellular segment spans residues 207-225 (NSLPDFQIPDSQGNPGEDP). The chain crosses the membrane as a helical span at residues 226–248 (RFEIVEHFGIAWFTFELVARFAV). Over 249 to 259 (APDFLKFFKNA) the chain is Cytoplasmic. The chain crosses the membrane as a helical span at residues 260–280 (LNLIDLMSIVPFYITLVVNLV). Residues 281-290 (VESSPTLANL) lie on the Extracellular side of the membrane. A helical; Voltage-sensor membrane pass occupies residues 291–311 (GRVAQVLRLMRIFRILKLARH). The Cytoplasmic segment spans residues 312 to 326 (STGLRSLGATLKYSY). Residues 327-348 (KEVGLLLLYLSVGISIFSVVAY) form a helical membrane-spanning segment. Over 349-361 (TIEKEENEGLATI) the chain is Extracellular. The segment at residues 362–373 (PACWWWATVSMT) is an intramembrane region (helical). A Selectivity filter motif is present at residues 374 to 379 (TVGYGD). Residues 374–381 (TVGYGDVV) lie within the membrane without spanning it. The Extracellular portion of the chain corresponds to 382 to 388 (PGTTAGK). Residues 389 to 417 (LTASACILAGILVVVLPITLIFNKFSHFY) traverse the membrane as a helical segment. The Cytoplasmic portion of the chain corresponds to 418–477 (RRQKQLESAMRSCDFGDGMKEVPSVNLRDYYAHKVKSLMASLTNMSRSSPSELSLDDSLH).

Belongs to the potassium channel family. S (TC 1.A.1.2) subfamily. Kv9.2/KCNS2 sub-subfamily. As to quaternary structure, heterotetramer with KCNB1 and KCNB2. Does not form homomultimers. In terms of tissue distribution, detected in brain, but not in the other tissues tested. Expression was highest in the olfactory bulb, cerebral cortex, hippocampus, habenula, basolateral amygdaloid nuclei and cerebellum.

It is found in the cell membrane. Functionally, potassium channel regulatory subunit that modulate the delayed rectifier voltage-gated potassium channel activity of KCNB1 and KCNB2 by altering their kinetics, expression levels, and shifting the half-inactivation potential to more polarized values. While it does not form functional channels on its own, it can form functional heterotetrameric channels with KCNB1 and KCNB2. Each regulatory subunit has unique regulatory properties that can lead to extensive inhibition, significant changes in kinetics, and/or substantial shifts in the voltage dependencies of the inactivation process. In Mus musculus (Mouse), this protein is Delayed-rectifier potassium channel regulatory subunit KCNS2.